The following is a 403-amino-acid chain: 8-amino-7-oxononanoate synthase (403 aa).

A substrate-binding site is contributed by R22. 109-110 (GF) contributes to the pyridoxal 5'-phosphate binding site. H134 contacts substrate. Positions 178, 206, and 232 each coordinate pyridoxal 5'-phosphate. K235 carries the post-translational modification N6-(pyridoxal phosphate)lysine. Residue T348 coordinates substrate. Positions 383 to 403 (SNDSGSKPSIESSFELKKEAQ) are disordered. A compositionally biased stretch (polar residues) spans 385–394 (DSGSKPSIES).

It belongs to the class-II pyridoxal-phosphate-dependent aminotransferase family. BioF subfamily. Homodimer. Requires pyridoxal 5'-phosphate as cofactor.

It carries out the reaction 6-carboxyhexanoyl-[ACP] + L-alanine + H(+) = (8S)-8-amino-7-oxononanoate + holo-[ACP] + CO2. It participates in cofactor biosynthesis; biotin biosynthesis. Functionally, catalyzes the decarboxylative condensation of pimeloyl-[acyl-carrier protein] and L-alanine to produce 8-amino-7-oxononanoate (AON), [acyl-carrier protein], and carbon dioxide. In Vibrio atlanticus (strain LGP32) (Vibrio splendidus (strain Mel32)), this protein is 8-amino-7-oxononanoate synthase.